The chain runs to 498 residues: MPRYSITTFGCQMNVHDSERMHDVLRCAGYTEAGSADEADVLVLNTCSVREKAEQKLRSEVGRLARWKRERADRVLVVAGCVAQQEGERLLKQMRAIDVVVGPDNIPELPGLLGDLAIGGLPIARTVFDLDAPRFLVASPPSPSSSSSPRAAPTAFVTVMKGCDERCSFCIVPHTRGPERYRPSDEIVAEIAALVAAGTREVTLLGQTVNSYRDPLGALPRAPGASADDPDESEFAALLRRVAADVPGLARLRYTSPHPRHLTPSLVLAHAELPVLPRHVHMPVQSGSDRVLRRMIRRYTRAEYVARTRALVEAVPGLTLSTDIIVGFPGETEDDFAATLSLVREVGFKGLFGFKYSRRPHTPALKLPDDVPEGVKGERLARLFEESEALLAAHLSALVGTTQEVLVEGRDKERGHGGAGGALWSGRTGRHEIAHIDGAGELDLLGEVVEVSIARANKHSLQAELTEAARAAARPRQRGGLEPRPARRSLPVVAAEGG.

The region spanning 2 to 118 is the MTTase N-terminal domain; that stretch reads PRYSITTFGC…LPGLLGDLAI (117 aa). Cys11, Cys47, Cys81, Cys163, Cys167, and Cys170 together coordinate [4Fe-4S] cluster. The 245-residue stretch at 149-393 folds into the Radical SAM core domain; it reads PRAAPTAFVT…FEESEALLAA (245 aa). In terms of domain architecture, TRAM spans 396-467; sequence SALVGTTQEV…KHSLQAELTE (72 aa). The segment at 469 to 498 is disordered; it reads ARAAARPRQRGGLEPRPARRSLPVVAAEGG.

The protein belongs to the methylthiotransferase family. MiaB subfamily. As to quaternary structure, monomer. Requires [4Fe-4S] cluster as cofactor.

The protein resides in the cytoplasm. It catalyses the reaction N(6)-dimethylallyladenosine(37) in tRNA + (sulfur carrier)-SH + AH2 + 2 S-adenosyl-L-methionine = 2-methylsulfanyl-N(6)-dimethylallyladenosine(37) in tRNA + (sulfur carrier)-H + 5'-deoxyadenosine + L-methionine + A + S-adenosyl-L-homocysteine + 2 H(+). Functionally, catalyzes the methylthiolation of N6-(dimethylallyl)adenosine (i(6)A), leading to the formation of 2-methylthio-N6-(dimethylallyl)adenosine (ms(2)i(6)A) at position 37 in tRNAs that read codons beginning with uridine. This Sorangium cellulosum (strain So ce56) (Polyangium cellulosum (strain So ce56)) protein is tRNA-2-methylthio-N(6)-dimethylallyladenosine synthase.